The following is a 265-amino-acid chain: tRNA pseudouridine synthase A (265 aa).

Asp58 functions as the Nucleophile in the catalytic mechanism. Residue Tyr116 participates in substrate binding.

Belongs to the tRNA pseudouridine synthase TruA family. In terms of assembly, homodimer.

It carries out the reaction uridine(38/39/40) in tRNA = pseudouridine(38/39/40) in tRNA. Functionally, formation of pseudouridine at positions 38, 39 and 40 in the anticodon stem and loop of transfer RNAs. The chain is tRNA pseudouridine synthase A from Neisseria meningitidis serogroup B (strain ATCC BAA-335 / MC58).